The sequence spans 159 residues: Crossover junction endodeoxyribonuclease RuvC (159 aa).

Residues D7, E67, and D139 contribute to the active site. Mg(2+) contacts are provided by D7, E67, and D139.

Belongs to the RuvC family. As to quaternary structure, homodimer which binds Holliday junction (HJ) DNA. The HJ becomes 2-fold symmetrical on binding to RuvC with unstacked arms; it has a different conformation from HJ DNA in complex with RuvA. In the full resolvosome a probable DNA-RuvA(4)-RuvB(12)-RuvC(2) complex forms which resolves the HJ. Requires Mg(2+) as cofactor.

It is found in the cytoplasm. It carries out the reaction Endonucleolytic cleavage at a junction such as a reciprocal single-stranded crossover between two homologous DNA duplexes (Holliday junction).. Its function is as follows. The RuvA-RuvB-RuvC complex processes Holliday junction (HJ) DNA during genetic recombination and DNA repair. Endonuclease that resolves HJ intermediates. Cleaves cruciform DNA by making single-stranded nicks across the HJ at symmetrical positions within the homologous arms, yielding a 5'-phosphate and a 3'-hydroxyl group; requires a central core of homology in the junction. The consensus cleavage sequence is 5'-(A/T)TT(C/G)-3'. Cleavage occurs on the 3'-side of the TT dinucleotide at the point of strand exchange. HJ branch migration catalyzed by RuvA-RuvB allows RuvC to scan DNA until it finds its consensus sequence, where it cleaves and resolves the cruciform DNA. This chain is Crossover junction endodeoxyribonuclease RuvC, found in Orientia tsutsugamushi (strain Boryong) (Rickettsia tsutsugamushi).